A 396-amino-acid polypeptide reads, in one-letter code: L-lactate dehydrogenase (396 aa).

The 380-residue stretch at 1 to 380 (MIISAASDYR…TQDSLVQGLG (380 aa)) folds into the FMN hydroxy acid dehydrogenase domain. Residue Tyr-24 participates in substrate binding. FMN contacts are provided by Ser-106 and Gln-127. Tyr-129 contributes to the substrate binding site. Residue Thr-155 participates in FMN binding. Arg-164 is a substrate binding site. Lys-251 serves as a coordination point for FMN. The active-site Proton acceptor is the His-275. Arg-278 is a binding site for substrate. An FMN-binding site is contributed by 306 to 330 (DSGIRNGLDVVRMIALGADTILLGR).

It belongs to the FMN-dependent alpha-hydroxy acid dehydrogenase family. FMN is required as a cofactor.

The protein localises to the cell inner membrane. The enzyme catalyses (S)-lactate + A = pyruvate + AH2. Catalyzes the conversion of L-lactate to pyruvate. Is coupled to the respiratory chain. The sequence is that of L-lactate dehydrogenase from Escherichia coli O81 (strain ED1a).